The chain runs to 534 residues: Pentatricopeptide repeat-containing protein At2g20540 (534 aa).

PPR repeat units follow at residues 41–71 (SSFM…VSNP), 72–106 (NVFL…SFEL), 108–142 (DRFT…GPRF), 143–173 (HVVT…MYER), 174–208 (DVIS…TIVS), 209–239 (WTAM…GIEP), 240–274 (DEIS…GFLK), 275–305 (QTGV…MEGK), 306–340 (DVIS…KVKP), 341–371 (NGIT…MRQD), and 377–407 (KIEH…MPMK). The type E motif stretch occupies residues 412–487 (IWGSLLSSCR…TPGGSLIEVN (76 aa)). The segment at 488–518 (NIVQEFVSGDNSKPFWTEISIVLQLFTSHQD) is type E(+) motif.

Belongs to the PPR family. PCMP-E subfamily.

In Arabidopsis thaliana (Mouse-ear cress), this protein is Pentatricopeptide repeat-containing protein At2g20540 (PCMP-E78).